Here is a 501-residue protein sequence, read N- to C-terminus: Ribose import ATP-binding protein RbsA (501 aa).

ABC transporter domains lie at 5–241 (LQLK…VGRK) and 252–495 (APGE…VGKL). 37-44 (GENGAGKS) lines the ATP pocket.

Belongs to the ABC transporter superfamily. Ribose importer (TC 3.A.1.2.1) family. In terms of assembly, the complex is composed of an ATP-binding protein (RbsA), two transmembrane proteins (RbsC) and a solute-binding protein (RbsB).

The protein localises to the cell inner membrane. It catalyses the reaction D-ribose(out) + ATP + H2O = D-ribose(in) + ADP + phosphate + H(+). In terms of biological role, part of the ABC transporter complex RbsABC involved in ribose import. Responsible for energy coupling to the transport system. The sequence is that of Ribose import ATP-binding protein RbsA from Salmonella paratyphi A (strain ATCC 9150 / SARB42).